Here is a 637-residue protein sequence, read N- to C-terminus: Sodium-dependent phosphate transport protein 2A (637 aa).

Residues 1 to 103 are Cytoplasmic-facing; it reads MMSYSERLGG…LAQVGTKLLK (103 aa). Residues Ser14 and Ser34 each carry the phosphoserine modification. The chain crosses the membrane as a helical span at residues 104–125; that stretch reads VPLMLAFLYLFVCSLDVLSSAF. Residues 126-145 are Extracellular-facing; the sequence is QLAGGKVAGDIFKDNAILSN. A helical transmembrane segment spans residues 146-163; the sequence is PVAGLVVGILVTVLVQSS. Topologically, residues 164–165 are cytoplasmic; sequence ST. A helical transmembrane segment spans residues 166 to 185; that stretch reads STSIIVSMVSSGLLEVSSAI. At 186–345 the chain is on the extracellular side; that stretch reads PIIMGSNIGT…HIFVDTGLPD (160 aa). 2 cysteine pairs are disulfide-bonded: Cys225–Cys520 and Cys306–Cys334. 2 N-linked (GlcNAc...) asparagine glycosylation sites follow: Asn298 and Asn328. Residues 346 to 368 traverse the membrane as a helical segment; it reads LAVGLILLAGSLVVLCTCLILLV. Residues 369-410 are Cytoplasmic-facing; that stretch reads KMLNSLLKGQVMSSRRSSTQTDFPAPFTWVTGYFAMVVGASM. Residues 411-434 traverse the membrane as a helical segment; sequence TFVVQSSSVFTSAITPLIGLGVIS. The Extracellular segment spans residues 435-464; it reads IERAYPLTLGSNIGTTTTAILAALASPREK. A helical membrane pass occupies residues 465–485; the sequence is LSSSFQIALCHFFFNISGILL. At 486 to 511 the chain is on the cytoplasmic side; the sequence is WYPLPCTRLPIRMAKALGKRTAKYRW. Thr506 carries the phosphothreonine; by PKC modification. Residues 512–532 form a helical membrane-spanning segment; sequence FAVLYLLVCFLLLPSLVFGIS. Residues 533 to 537 lie on the Extracellular side of the membrane; that stretch reads MAGWQ. A helical membrane pass occupies residues 538 to 559; that stretch reads AMVGVGTPFGALLAFVVLVNVL. Residues 560-637 lie on the Cytoplasmic side of the membrane; the sequence is QSRSPGHLPK…LPAHHNATRL (78 aa). Phosphoserine is present on Ser605. Thr621 carries the phosphothreonine modification. Ser623 is modified (phosphoserine).

It belongs to the SLC34A transporter family. In terms of assembly, interacts via its C-terminal region with NHERF4. Interacts with NHERF1. Interacts with TMEM174; regulates SLC34A1 internalization by PTH and FGF23. Kidney.

It is found in the apical cell membrane. The protein localises to the cell membrane. The catalysed reaction is 3 Na(+)(out) + phosphate(out) = 3 Na(+)(in) + phosphate(in). Its function is as follows. Involved in actively transporting phosphate into cells via Na(+) cotransport in the renal brush border membrane. The cotransport has a Na(+):Pi stoichiometry of 3:1 and is electrogenic. This Mus musculus (Mouse) protein is Sodium-dependent phosphate transport protein 2A.